A 329-amino-acid polypeptide reads, in one-letter code: UDP-2,3-diacylglucosamine pyrophosphatase LpxG (329 aa).

A helical membrane pass occupies residues 2-24 (FVFVGSTVSLTAIVAAPVLTWIW). Residues aspartate 59, histidine 61, aspartate 91, asparagine 123, histidine 257, and histidine 259 each contribute to the a divalent metal cation site.

The protein belongs to the metallophosphoesterase superfamily. The cofactor is Mn(2+).

It is found in the cell inner membrane. It carries out the reaction UDP-2,3-diacyl-alpha-D-glucosamine + H2O = 2,3-diacyl-alpha-D-glucosaminyl 1-phosphate + UMP + 2 H(+). Its pathway is glycolipid biosynthesis; lipid IV(A) biosynthesis. Functionally, hydrolyzes the pyrophosphate bond of UDP-2,3-diacylglucosamine to form 2,3-diacylglucosamine 1-phosphate (lipid X) and UMP by catalyzing the attack of water at the alpha-P atom. Involved in the biosynthesis of lipid A, a phosphorylated glycolipid that anchors the lipooligosaccharide (LOS) to the outer membrane of the cell. This chain is UDP-2,3-diacylglucosamine pyrophosphatase LpxG, found in Chlamydia muridarum (strain MoPn / Nigg).